The primary structure comprises 92 residues: Small ribosomal subunit protein uS19 (92 aa).

It belongs to the universal ribosomal protein uS19 family.

Functionally, protein S19 forms a complex with S13 that binds strongly to the 16S ribosomal RNA. This is Small ribosomal subunit protein uS19 from Photorhabdus laumondii subsp. laumondii (strain DSM 15139 / CIP 105565 / TT01) (Photorhabdus luminescens subsp. laumondii).